The primary structure comprises 120 residues: Protein Wnt-9 (120 aa).

Ser1 is lipidated: O-palmitoleoyl serine; by PORCN. An intrachain disulfide couples Cys90 to Cys101.

Belongs to the Wnt family. In terms of processing, palmitoleoylation is required for efficient binding to frizzled receptors. Depalmitoleoylation leads to Wnt signaling pathway inhibition.

The protein localises to the secreted. Its subcellular location is the extracellular space. It is found in the extracellular matrix. In terms of biological role, ligand for members of the frizzled family of seven transmembrane receptors. Probable developmental protein. May be a signaling molecule which affects the development of discrete regions of tissues. Is likely to signal over only few cell diameters. The polypeptide is Protein Wnt-9 (WNT-9) (Alopias vulpinus (Common thresher shark)).